A 115-amino-acid polypeptide reads, in one-letter code: UPF0738 protein SERP0585 (115 aa).

The protein belongs to the UPF0738 family.

In Staphylococcus epidermidis (strain ATCC 35984 / DSM 28319 / BCRC 17069 / CCUG 31568 / BM 3577 / RP62A), this protein is UPF0738 protein SERP0585.